The following is a 432-amino-acid chain: Alcohol acyltransferase 9 (432 aa).

Catalysis depends on proton acceptor residues H156 and D379.

This sequence belongs to the plant acyltransferase family. In terms of tissue distribution, expressed in fruit.

The enzyme catalyses 2-(methylsulfanyl)acetyl-CoA + butan-1-ol = butyl 2-(methylsulfanyl)acetate + CoA. It carries out the reaction ethanol + acetyl-CoA = ethyl acetate + CoA. It catalyses the reaction butan-1-ol + acetyl-CoA = butyl acetate + CoA. The catalysed reaction is butan-1-ol + propanoyl-CoA = butyl propanoate + CoA. Functionally, involved in the biosynthesis of volatile esters which confer kiwifruit flavor. Alcohol acyl transferase that can use a wide range of alcohols as substrate to produce esters. Exhibits acetyl-CoA:alcohol O-acyltransferase activity. In Actinidia eriantha (Velvet vine), this protein is Alcohol acyltransferase 9.